Here is a 170-residue protein sequence, read N- to C-terminus: Adenine phosphoribosyltransferase (170 aa).

This sequence belongs to the purine/pyrimidine phosphoribosyltransferase family. In terms of assembly, homodimer.

The protein localises to the cytoplasm. It catalyses the reaction AMP + diphosphate = 5-phospho-alpha-D-ribose 1-diphosphate + adenine. It functions in the pathway purine metabolism; AMP biosynthesis via salvage pathway; AMP from adenine: step 1/1. In terms of biological role, catalyzes a salvage reaction resulting in the formation of AMP, that is energically less costly than de novo synthesis. This is Adenine phosphoribosyltransferase from Streptococcus sanguinis (strain SK36).